A 163-amino-acid polypeptide reads, in one-letter code: uncharacterized protein (163 aa).

Residues 1–10 are compositionally biased toward basic and acidic residues; the sequence is MTHPLPHDSH. 2 disordered regions span residues 1-21 and 71-112; these read MTHP…VNKS and SKQP…EQRR. The span at 90–105 shows a compositional bias: polar residues; sequence PASSLQDHSRLTSLSR.

This is an uncharacterized protein from Homo sapiens (Human).